A 314-amino-acid polypeptide reads, in one-letter code: Putative S-adenosyl-L-methionine-dependent methyltransferase MAV_0301 (314 aa).

Residues Asp132 and 161-162 contribute to the S-adenosyl-L-methionine site; that span reads DL.

It belongs to the UPF0677 family.

Functionally, exhibits S-adenosyl-L-methionine-dependent methyltransferase activity. In Mycobacterium avium (strain 104), this protein is Putative S-adenosyl-L-methionine-dependent methyltransferase MAV_0301.